A 364-amino-acid polypeptide reads, in one-letter code: C2 calcium-dependent domain-containing protein 4A (364 aa).

2 disordered regions span residues 118-175 and 192-242; these read GSPS…PPRC and AGRS…RPER. The span at 220 to 233 shows a compositional bias: polar residues; sequence SPGSPTQAPVTSLS. In terms of domain architecture, C2 spans 254–364; it reads AGGALRLAAE…ELLLGPLLLL (111 aa).

This sequence belongs to the C2CD4 family.

The protein localises to the nucleus. In terms of biological role, may be involved in inflammatory process. May regulate cell architecture and adhesion. The sequence is that of C2 calcium-dependent domain-containing protein 4A (C2CD4A) from Bos taurus (Bovine).